Consider the following 187-residue polypeptide: Abscisic acid receptor PYL9 (187 aa).

The START-like stretch occupies residues 27–178 (HLCRENQCTS…NLKSLADVSE (152 aa)). Intrachain disulfides connect Cys-29–Cys-159 and Cys-34–Cys-159. Abscisate is bound by residues Lys-63, 91-96 (ATTSTE), 118-124 (RLKNYSS), and Glu-143. The short motif at 87 to 91 (SGLPA) is the Gate loop element. The short motif at 117-119 (HRL) is the Latch loop element.

This sequence belongs to the PYR/PYL/RCAR abscisic acid intracellular receptor family. Homodimer. Monomer. Binds ABA on one subunit only. Binds to CARs protein in an ABA-independent manner, both at the plasma membrane and in the nucleus. Binds specifically (+)-ABA but not (-)-ABA. Interacts with HAB1, ABI1 and ABI2, and possibly with other PP2Cs. Interacts with TOPP1. Interacts with DDA1. In terms of tissue distribution, expressed in root tips, vascular tissues, stomata, flowers, pollen tubes and developing seeds.

Its subcellular location is the cytoplasm. It is found in the nucleus. The protein resides in the cell membrane. Receptor for abscisic acid (ABA) required for ABA-mediated responses such as stomatal closure and germination inhibition. Inhibits the activity of group-A protein phosphatases type 2C (PP2Cs) in an ABA-independent manner but more efficiently when activated by ABA. Confers enhanced sensitivity to ABA. Can be activated only by (+)-ABA but not by (-)-ABA. This is Abscisic acid receptor PYL9 (PYL9) from Arabidopsis thaliana (Mouse-ear cress).